The following is a 493-amino-acid chain: Tripartite motif-containing protein 5 (493 aa).

A2 carries the post-translational modification N-acetylalanine. The RING-type zinc-finger motif lies at 15-59 (CPICLELLTQPLSLDCGHSFCQACLTANHKKSMLDKGESSCPVCR). At S86 the chain carries Phosphoserine. The B box-type zinc-finger motif lies at 90 to 132 (QKVDHCAHHGEKLLLFCQEDGKVICWLCERSQEHRGHHTFLTE). 4 residues coordinate Zn(2+): C95, H98, C117, and H123. The stretch at 131–240 (TEEVAREYQV…LISDLERRLQ (110 aa)) forms a coiled coil. Positions 185-198 (FEQLRDILDWEESN) are required for interaction with GABARAP and for autophagy. The region spanning 281 to 493 (LKGMLEVFRE…VPMTLCSPSS (213 aa)) is the B30.2/SPRY domain.

The protein belongs to the TRIM/RBCC family. As to quaternary structure, can form homodimers and homotrimers. In addition to lower-order dimerization, also exhibits a higher-order multimerization and both low- and high-order multimerizations are essential for its restriction activity. Interacts with BTBD1 and BTBD2. Interacts with PSMC4, PSMC5, PSMD7 and HSPA8/HSC70. Interacts (via B30.2/SPRY domain) with HSPA1A/B. Interacts with PSMC2, MAP3K7/TAK1, TAB2 and TAB3. Interacts with SQSTM1. Interacts with TRIM6 and TRIM34. Interacts with ULK1 (phosphorylated form), GABARAP, GABARAPL1, GABARAPL2, MAP1LC3A, MAP1LC3C and BECN1. Post-translationally, degraded in a proteasome-independent fashion in the absence of viral infection but in a proteasome-dependent fashion following exposure to restriction sensitive virus. In terms of processing, autoubiquitinated in a RING finger- and UBE2D2-dependent manner. Monoubiquitinated by TRIM21. Deubiquitinated by Yersinia YopJ. Ubiquitination may not lead to proteasomal degradation.

The protein resides in the cytoplasm. The protein localises to the nucleus. It carries out the reaction S-ubiquitinyl-[E2 ubiquitin-conjugating enzyme]-L-cysteine + [acceptor protein]-L-lysine = [E2 ubiquitin-conjugating enzyme]-L-cysteine + N(6)-ubiquitinyl-[acceptor protein]-L-lysine.. It participates in protein modification; protein ubiquitination. In terms of biological role, capsid-specific restriction factor that prevents infection from non-host-adapted retroviruses. Blocks viral replication early in the life cycle, after viral entry but before reverse transcription. In addition to acting as a capsid-specific restriction factor, also acts as a pattern recognition receptor that activates innate immune signaling in response to the retroviral capsid lattice. Binding to the viral capsid triggers its E3 ubiquitin ligase activity, and in concert with the heterodimeric ubiquitin conjugating enzyme complex UBE2V1-UBE2N (also known as UBC13-UEV1A complex) generates 'Lys-63'-linked polyubiquitin chains, which in turn are catalysts in the autophosphorylation of the MAP3K7/TAK1 complex (includes TAK1, TAB2, and TAB3). Activation of the MAP3K7/TAK1 complex by autophosphorylation results in the induction and expression of NF-kappa-B and MAPK-responsive inflammatory genes, thereby leading to an innate immune response in the infected cell. Plays a role in regulating autophagy through activation of autophagy regulator BECN1 by causing its dissociation from its inhibitors BCL2 and TAB2. The polypeptide is Tripartite motif-containing protein 5 (TRIM5) (Pan troglodytes (Chimpanzee)).